The chain runs to 562 residues: Malate synthase (562 aa).

Residue R177 is the Proton acceptor of the active site. Residue D463 is the Proton donor of the active site. Residues S560–L562 carry the Microbody targeting signal motif.

This sequence belongs to the malate synthase family.

The protein resides in the glyoxysome. It catalyses the reaction glyoxylate + acetyl-CoA + H2O = (S)-malate + CoA + H(+). It participates in carbohydrate metabolism; glyoxylate cycle; (S)-malate from isocitrate: step 2/2. Functionally, does not seem to be essential for lipid utilization and gluconeogenesis in seedlings. This Arabidopsis thaliana (Mouse-ear cress) protein is Malate synthase.